A 682-amino-acid polypeptide reads, in one-letter code: Potassium-transporting ATPase ATP-binding subunit (682 aa).

Helical transmembrane passes span 34-54, 58-78, 219-239, and 254-274; these read PVMFVVWAGSVLTTLLTLAMV, IAGSALFTGIISLWLWFTVLF, IALTILLIALTIVFLLATATL, and VLVALLVCLIPTTIGGLLSAI. D307 serves as the catalytic 4-aspartylphosphate intermediate. ATP is bound by residues D344, E348, 377–384, and K395; that span reads FTAQSRMS. 2 residues coordinate Mg(2+): D518 and D522. Transmembrane regions (helical) follow at residues 588–608, 616–636, and 662–682; these read FAIIPAAFAATYPQLNALNVM, AILSAVIFNALIIIFLIPLAL, and LVVPFIGIKVIDVLLTLLGLA.

Belongs to the cation transport ATPase (P-type) (TC 3.A.3) family. Type IA subfamily. In terms of assembly, the system is composed of three essential subunits: KdpA, KdpB and KdpC.

It localises to the cell inner membrane. It carries out the reaction K(+)(out) + ATP + H2O = K(+)(in) + ADP + phosphate + H(+). In terms of biological role, part of the high-affinity ATP-driven potassium transport (or Kdp) system, which catalyzes the hydrolysis of ATP coupled with the electrogenic transport of potassium into the cytoplasm. This subunit is responsible for energy coupling to the transport system and for the release of the potassium ions to the cytoplasm. The chain is Potassium-transporting ATPase ATP-binding subunit from Salmonella newport (strain SL254).